The primary structure comprises 1412 residues: DNA-directed RNA polymerase subunit beta' (1412 aa).

The Zn(2+) site is built by C70, C72, C85, and C88. Residues D460, D462, and D464 each coordinate Mg(2+). Zn(2+)-binding residues include C819, C893, C900, and C903. A disordered region spans residues 1391–1412 (AEESFEFGTPETPAAEQQHSGE).

Belongs to the RNA polymerase beta' chain family. As to quaternary structure, the RNAP catalytic core consists of 2 alpha, 1 beta, 1 beta' and 1 omega subunit. When a sigma factor is associated with the core the holoenzyme is formed, which can initiate transcription. Mg(2+) is required as a cofactor. Requires Zn(2+) as cofactor.

The enzyme catalyses RNA(n) + a ribonucleoside 5'-triphosphate = RNA(n+1) + diphosphate. DNA-dependent RNA polymerase catalyzes the transcription of DNA into RNA using the four ribonucleoside triphosphates as substrates. The chain is DNA-directed RNA polymerase subunit beta' from Paraburkholderia phytofirmans (strain DSM 17436 / LMG 22146 / PsJN) (Burkholderia phytofirmans).